Here is a 212-residue protein sequence, read N- to C-terminus: N-(5'-phosphoribosyl)anthranilate isomerase (212 aa).

It belongs to the TrpF family.

The catalysed reaction is N-(5-phospho-beta-D-ribosyl)anthranilate = 1-(2-carboxyphenylamino)-1-deoxy-D-ribulose 5-phosphate. It functions in the pathway amino-acid biosynthesis; L-tryptophan biosynthesis; L-tryptophan from chorismate: step 3/5. In Roseiflexus castenholzii (strain DSM 13941 / HLO8), this protein is N-(5'-phosphoribosyl)anthranilate isomerase.